Reading from the N-terminus, the 424-residue chain is CinA-like protein (424 aa).

This sequence belongs to the CinA family.

The protein is CinA-like protein of Shewanella woodyi (strain ATCC 51908 / MS32).